A 610-amino-acid chain; its full sequence is UvrABC system protein C (610 aa).

The region spanning 16 to 94 (SQPGVYRMYD…IKLYQPRYNV (79 aa)) is the GIY-YIG domain. A UVR domain is found at 204–239 (DQVINQLVSRMEQASQNLAFEEAARLRDQIQAVRRV).

The protein belongs to the UvrC family. As to quaternary structure, interacts with UvrB in an incision complex.

It is found in the cytoplasm. The UvrABC repair system catalyzes the recognition and processing of DNA lesions. UvrC both incises the 5' and 3' sides of the lesion. The N-terminal half is responsible for the 3' incision and the C-terminal half is responsible for the 5' incision. This is UvrABC system protein C from Cronobacter sakazakii (strain ATCC BAA-894) (Enterobacter sakazakii).